Consider the following 81-residue polypeptide: Sulfur carrier protein TusA (81 aa).

Catalysis depends on cysteine 19, which acts as the Cysteine persulfide intermediate.

The protein belongs to the sulfur carrier protein TusA family. Interacts with IscS.

The protein resides in the cytoplasm. The protein operates within tRNA modification. Sulfur carrier protein involved in sulfur trafficking in the cell. Part of a sulfur-relay system required for 2-thiolation during synthesis of 2-thiouridine of the modified wobble base 5-methylaminomethyl-2-thiouridine (mnm(5)s(2)U) in tRNA. Interacts with IscS and stimulates its cysteine desulfurase activity. Accepts an activated sulfur from IscS, which is then transferred to TusD, and thus determines the direction of sulfur flow from IscS to 2-thiouridine formation. Also appears to be involved in sulfur transfer for the biosynthesis of molybdopterin. This Escherichia coli O17:K52:H18 (strain UMN026 / ExPEC) protein is Sulfur carrier protein TusA.